Reading from the N-terminus, the 695-residue chain is WD repeat-containing protein 93 (695 aa).

Positions 1–35 are disordered; it reads MSSFKGNQAQKRRLSVFPKGPLEIPSPTEADWPKD. The stretch at 421–460 is one WD repeat; that stretch reads PCAAPIVMSQISSFSSYLALVCEDGVLILWDLAEGFLFGV.

Testis-specific. Expressed in spermatogonia, spermatocytes and spermatids.

The sequence is that of WD repeat-containing protein 93 (Wdr93) from Mus musculus (Mouse).